The chain runs to 311 residues: Manganese-dependent ADP-ribose/CDP-alcohol diphosphatase (311 aa).

Zn(2+)-binding residues include Asp17, Gln19, Asp64, Asn99, His218, His255, and His257.

The protein belongs to the ADPRibase-Mn family. Monomer. The cofactor is Mg(2+).

The catalysed reaction is CDP-choline + H2O = phosphocholine + CMP + 2 H(+). The enzyme catalyses ADP-D-ribose + H2O = D-ribose 5-phosphate + AMP + 2 H(+). It catalyses the reaction CDP-glycerol + H2O = sn-glycerol 3-phosphate + CMP + 2 H(+). Its function is as follows. Hydrolyzes ADP-ribose, IDP-ribose, CDP-glycerol, CDP-choline and CDP-ethanolamine, but not other non-reducing ADP-sugars or CDP-glucose. The sequence is that of Manganese-dependent ADP-ribose/CDP-alcohol diphosphatase from Arabidopsis thaliana (Mouse-ear cress).